A 364-amino-acid polypeptide reads, in one-letter code: 3-dehydroquinate synthase (364 aa).

NAD(+) is bound by residues 73–78 (DGEQNK), 107–111 (GVIGD), 131–132 (TT), K144, K153, and 171–174 (CLCT). Zn(2+) contacts are provided by E186, H249, and H266.

Belongs to the sugar phosphate cyclases superfamily. Dehydroquinate synthase family. It depends on NAD(+) as a cofactor. Co(2+) serves as cofactor. Zn(2+) is required as a cofactor.

It localises to the cytoplasm. It catalyses the reaction 7-phospho-2-dehydro-3-deoxy-D-arabino-heptonate = 3-dehydroquinate + phosphate. It functions in the pathway metabolic intermediate biosynthesis; chorismate biosynthesis; chorismate from D-erythrose 4-phosphate and phosphoenolpyruvate: step 2/7. Catalyzes the conversion of 3-deoxy-D-arabino-heptulosonate 7-phosphate (DAHP) to dehydroquinate (DHQ). In Blochmanniella floridana, this protein is 3-dehydroquinate synthase.